The chain runs to 194 residues: Porimin (194 aa).

An N-terminal signal peptide occupies residues 1–24; it reads MALCARAALLLGALQVLALPGAVA. At 25–151 the chain is on the extracellular side; the sequence is QETYAQGSPS…PTKGKGSKFD (127 aa). Residues N36, N47, N51, N59, N76, and N114 are each glycosylated (N-linked (GlcNAc...) asparagine). The interval 88–124 is disordered; that stretch reads KVSTPGVSPHVTPSASKSTPKTSASPNSTQTSASMTT. Positions 99–124 are enriched in low complexity; the sequence is TPSASKSTPKTSASPNSTQTSASMTT. Residues 152–172 traverse the membrane as a helical segment; that stretch reads AGSFVGGIVLTLGVLSILYIG. The Cytoplasmic segment spans residues 173–194; the sequence is CKMYYSRRGIRYRSIDEHDAII. S186 bears the Phosphoserine mark.

The protein belongs to the CD164 family.

It is found in the membrane. Implicated in oncotic cell death, characterized by cell swelling, organelle swelling, vacuolization and increased membrane permeability. The polypeptide is Porimin (Tmem123) (Rattus norvegicus (Rat)).